The sequence spans 154 residues: 17 kDa surface antigen (154 aa).

Residues 1–19 (MKLLSKIMIIALAASMLQA) form the signal peptide. Residue Cys-20 is the site of N-palmitoyl cysteine attachment. A lipid anchor (S-diacylglycerol cysteine) is attached at Cys-20.

The protein belongs to the rickettsiale 17 kDa surface antigen family.

It localises to the cell outer membrane. In Rickettsia rhipicephali, this protein is 17 kDa surface antigen (omp).